We begin with the raw amino-acid sequence, 858 residues long: DNA mismatch repair protein MutS (858 aa).

An ATP-binding site is contributed by Gly-600 to Ser-607.

It belongs to the DNA mismatch repair MutS family.

This protein is involved in the repair of mismatches in DNA. It is possible that it carries out the mismatch recognition step. This protein has a weak ATPase activity. In Bacillus pumilus (strain SAFR-032), this protein is DNA mismatch repair protein MutS.